We begin with the raw amino-acid sequence, 62 residues long: Small ribosomal subunit protein bS21 (62 aa).

A disordered region spans residues 38–62; it reads YEKPSERRKRKMNAAVRKNRRTRHG.

This sequence belongs to the bacterial ribosomal protein bS21 family.

The chain is Small ribosomal subunit protein bS21 from Gemmatimonas aurantiaca (strain DSM 14586 / JCM 11422 / NBRC 100505 / T-27).